A 257-amino-acid chain; its full sequence is Zinc transporter ZupT (257 aa).

3 consecutive transmembrane segments (helical) span residues 5 to 25 (LILT…GVLG), 32 to 52 (LLAF…LMEM), and 61 to 81 (GMSP…YFGL). Fe(2+)-binding residues include asparagine 120 and glutamate 123. Residues glutamate 123 and histidine 148 each contribute to the Zn(2+) site. Helical transmembrane passes span 137-157 (LGFG…LAVA), 171-191 (ILWA…AWLI), 195-215 (MISP…MVAL), and 236-256 (GVLC…TAGI). Asparagine 149, glutamate 152, and glutamate 181 together coordinate Fe(2+). A Zn(2+)-binding site is contributed by glutamate 152.

It belongs to the ZIP transporter (TC 2.A.5) family. ZupT subfamily.

Its subcellular location is the cell inner membrane. The catalysed reaction is Zn(2+)(in) = Zn(2+)(out). Its function is as follows. Mediates zinc uptake. May also transport other divalent cations. In Escherichia coli O7:K1 (strain IAI39 / ExPEC), this protein is Zinc transporter ZupT.